Here is an 87-residue protein sequence, read N- to C-terminus: UPF0250 protein KPN78578_06520 (87 aa).

This sequence belongs to the UPF0250 family.

In Klebsiella pneumoniae subsp. pneumoniae (strain ATCC 700721 / MGH 78578), this protein is UPF0250 protein KPN78578_06520.